The primary structure comprises 266 residues: Putative carbamate hydrolase RutD (266 aa).

This sequence belongs to the AB hydrolase superfamily. Hydrolase RutD family.

The catalysed reaction is carbamate + 2 H(+) = NH4(+) + CO2. Its function is as follows. Involved in pyrimidine catabolism. May facilitate the hydrolysis of carbamate, a reaction that can also occur spontaneously. In Escherichia coli O45:K1 (strain S88 / ExPEC), this protein is Putative carbamate hydrolase RutD.